The primary structure comprises 104 residues: Guanidinium exporter (104 aa).

Residue M1 is a topological domain, cytoplasmic. The helical transmembrane segment at 2–19 threads the bilayer; the sequence is AWIILVIAGLLEVIWAIG. Residues 20–28 are Periplasmic-facing; that stretch reads LKYSHGFSR. The chain crosses the membrane as a helical span at residues 29 to 48; the sequence is LTPSIITLVAMAASVFLLAY. Over 49–54 the chain is Cytoplasmic; the sequence is AMKSLP. Residues 55 to 77 form a helical membrane-spanning segment; sequence AGTAYAVWTGIGAVGTAILGIVL. Topologically, residues 78-81 are periplasmic; the sequence is LGES. Residues 82–100 traverse the membrane as a helical segment; the sequence is ASLARILSLGLILAGIIGL. At 101 to 104 the chain is on the cytoplasmic side; that stretch reads KLAS.

This sequence belongs to the drug/metabolite transporter (DMT) superfamily. Small multidrug resistance (SMR) (TC 2.A.7.1) family. Gdx/SugE subfamily.

It is found in the cell inner membrane. Guanidinium ion exporter. Couples guanidinium export to the proton motive force, exchanging one guanidinium ion for two protons. The sequence is that of Guanidinium exporter from Yersinia pestis.